Reading from the N-terminus, the 181-residue chain is Inner membrane-spanning protein YciB (181 aa).

Helical transmembrane passes span 10–30 (LVIF…GALI), 50–70 (MHLI…VFHD), 80–100 (IIYS…KSIL), 118–138 (VTWY…YVAF), and 148–168 (FKVF…VFYL).

The protein belongs to the YciB family.

Its subcellular location is the cell inner membrane. Its function is as follows. Plays a role in cell envelope biogenesis, maintenance of cell envelope integrity and membrane homeostasis. The sequence is that of Inner membrane-spanning protein YciB from Shewanella baltica (strain OS223).